The chain runs to 267 residues: tRNA pseudouridine synthase A (267 aa).

The Nucleophile role is filled by Asp51. Tyr109 is a binding site for substrate.

It belongs to the tRNA pseudouridine synthase TruA family. Homodimer.

It catalyses the reaction uridine(38/39/40) in tRNA = pseudouridine(38/39/40) in tRNA. In terms of biological role, formation of pseudouridine at positions 38, 39 and 40 in the anticodon stem and loop of transfer RNAs. The protein is tRNA pseudouridine synthase A of Staphylococcus carnosus (strain TM300).